Reading from the N-terminus, the 569-residue chain is Alpha-amylase (569 aa).

The N-terminal stretch at 1 to 28 is a signal peptide; it reads MARKTVAAALALVAGAAVAVTGNAPAQA. Residues Asn120, Gln166, and Asp175 each coordinate Ca(2+). The active-site Nucleophile is Asp205. His209 provides a ligand contact to Ca(2+). Residue Glu232 is the Proton donor of the active site. A CBM20 domain is found at 468 to 569; sequence TTPPATSGAS…QLVLNDTFRS (102 aa).

This sequence belongs to the glycosyl hydrolase 13 family. Monomer. It depends on Ca(2+) as a cofactor.

The catalysed reaction is Endohydrolysis of (1-&gt;4)-alpha-D-glucosidic linkages in polysaccharides containing three or more (1-&gt;4)-alpha-linked D-glucose units.. The protein is Alpha-amylase (aml) of Streptomyces violaceus (Streptomyces venezuelae).